The following is a 156-amino-acid chain: ATP synthase subunit b (156 aa).

The helical transmembrane segment at 7-29 threads the bilayer; it reads LLGQAISFGMFVWFCMKYVWPPI.

It belongs to the ATPase B chain family. In terms of assembly, F-type ATPases have 2 components, F(1) - the catalytic core - and F(0) - the membrane proton channel. F(1) has five subunits: alpha(3), beta(3), gamma(1), delta(1), epsilon(1). F(0) has three main subunits: a(1), b(2) and c(10-14). The alpha and beta chains form an alternating ring which encloses part of the gamma chain. F(1) is attached to F(0) by a central stalk formed by the gamma and epsilon chains, while a peripheral stalk is formed by the delta and b chains.

The protein resides in the cell inner membrane. Its function is as follows. F(1)F(0) ATP synthase produces ATP from ADP in the presence of a proton or sodium gradient. F-type ATPases consist of two structural domains, F(1) containing the extramembraneous catalytic core and F(0) containing the membrane proton channel, linked together by a central stalk and a peripheral stalk. During catalysis, ATP synthesis in the catalytic domain of F(1) is coupled via a rotary mechanism of the central stalk subunits to proton translocation. Component of the F(0) channel, it forms part of the peripheral stalk, linking F(1) to F(0). This Vibrio cholerae serotype O1 (strain ATCC 39541 / Classical Ogawa 395 / O395) protein is ATP synthase subunit b.